An 860-amino-acid polypeptide reads, in one-letter code: Pentatricopeptide repeat-containing protein At1g18900 (860 aa).

PPR repeat units lie at residues 363 to 397 (DGHT…GCQP), 398 to 432 (NTVT…GCKP), 433 to 467 (DRVT…GLSP), 468 to 502 (DTFT…GCTP), 503 to 537 (NLVT…GFEP), 538 to 572 (DKVT…NWIP), 573 to 607 (DEPV…GLRP), and 608 to 642 (NVPT…GLRP). A Smr domain is found at 760-843 (INLHVMSEGT…NSGCFVGSGE (84 aa)).

The protein belongs to the PPR family. P subfamily.

The chain is Pentatricopeptide repeat-containing protein At1g18900 from Arabidopsis thaliana (Mouse-ear cress).